A 195-amino-acid chain; its full sequence is Imidazoleglycerol-phosphate dehydratase (195 aa).

The protein belongs to the imidazoleglycerol-phosphate dehydratase family.

It localises to the cytoplasm. The enzyme catalyses D-erythro-1-(imidazol-4-yl)glycerol 3-phosphate = 3-(imidazol-4-yl)-2-oxopropyl phosphate + H2O. It participates in amino-acid biosynthesis; L-histidine biosynthesis; L-histidine from 5-phospho-alpha-D-ribose 1-diphosphate: step 6/9. The polypeptide is Imidazoleglycerol-phosphate dehydratase (Burkholderia thailandensis (strain ATCC 700388 / DSM 13276 / CCUG 48851 / CIP 106301 / E264)).